Here is a 127-residue protein sequence, read N- to C-terminus: Large ribosomal subunit protein eL32 (127 aa).

A compositionally biased stretch (basic and acidic residues) spans 38–48 (WRRPKGIDSKM). A disordered region spans residues 38–66 (WRRPKGIDSKMRLKKKGKPRSPSIGWSSP).

The protein belongs to the eukaryotic ribosomal protein eL32 family.

The protein is Large ribosomal subunit protein eL32 of Thermococcus gammatolerans (strain DSM 15229 / JCM 11827 / EJ3).